We begin with the raw amino-acid sequence, 236 residues long: 2,3,4,5-tetrahydropyridine-2,6-dicarboxylate N-acetyltransferase (236 aa).

Belongs to the transferase hexapeptide repeat family. DapH subfamily.

It carries out the reaction (S)-2,3,4,5-tetrahydrodipicolinate + acetyl-CoA + H2O = L-2-acetamido-6-oxoheptanedioate + CoA. It participates in amino-acid biosynthesis; L-lysine biosynthesis via DAP pathway; LL-2,6-diaminopimelate from (S)-tetrahydrodipicolinate (acetylase route): step 1/3. Catalyzes the transfer of an acetyl group from acetyl-CoA to tetrahydrodipicolinate. This Clostridium botulinum (strain Langeland / NCTC 10281 / Type F) protein is 2,3,4,5-tetrahydropyridine-2,6-dicarboxylate N-acetyltransferase.